Here is a 143-residue protein sequence, read N- to C-terminus: Fluoride-specific ion channel FluC (143 aa).

Helical transmembrane passes span 3–23, 41–61, 76–96, and 103–123; these read AVVW…GSGL, WGTL…LIWL, IVGL…CLVF, and LMVG…VFLG. Na(+) is bound by residues Gly81 and Thr84.

It belongs to the fluoride channel Fluc/FEX (TC 1.A.43) family.

Its subcellular location is the cell inner membrane. It carries out the reaction fluoride(in) = fluoride(out). With respect to regulation, na(+) is not transported, but it plays an essential structural role and its presence is essential for fluoride channel function. Its function is as follows. Fluoride-specific ion channel. Important for reducing fluoride concentration in the cell, thus reducing its toxicity. This chain is Fluoride-specific ion channel FluC, found in Xylella fastidiosa (strain 9a5c).